Consider the following 355-residue polypeptide: tRNA (guanine-N(1)-)-methyltransferase (355 aa).

S-adenosyl-L-methionine-binding positions include G109 and 129 to 134; that span reads IGDYVL.

Belongs to the RNA methyltransferase TrmD family. As to quaternary structure, homodimer.

It is found in the cytoplasm. The catalysed reaction is guanosine(37) in tRNA + S-adenosyl-L-methionine = N(1)-methylguanosine(37) in tRNA + S-adenosyl-L-homocysteine + H(+). Its function is as follows. Specifically methylates guanosine-37 in various tRNAs. This chain is tRNA (guanine-N(1)-)-methyltransferase, found in Chlamydia abortus (strain DSM 27085 / S26/3) (Chlamydophila abortus).